Reading from the N-terminus, the 356-residue chain is S-adenosylmethionine:tRNA ribosyltransferase-isomerase (356 aa).

It belongs to the QueA family. Monomer.

It is found in the cytoplasm. It carries out the reaction 7-aminomethyl-7-carbaguanosine(34) in tRNA + S-adenosyl-L-methionine = epoxyqueuosine(34) in tRNA + adenine + L-methionine + 2 H(+). It participates in tRNA modification; tRNA-queuosine biosynthesis. Its function is as follows. Transfers and isomerizes the ribose moiety from AdoMet to the 7-aminomethyl group of 7-deazaguanine (preQ1-tRNA) to give epoxyqueuosine (oQ-tRNA). The polypeptide is S-adenosylmethionine:tRNA ribosyltransferase-isomerase (Escherichia coli O6:K15:H31 (strain 536 / UPEC)).